Reading from the N-terminus, the 131-residue chain is TGSCCGPTFSSLSCGGGCLQPRYYRDPCCCRPVSCQTVSRPVTFVPRCTRPICEPCRRPVCCDPCSLQEGCCRPITCCPTSCQAVVCRPCCWATTCCQPVSVQCPCCRPTSCQPAPCSRTTCRTFRTSPCC.

Wool.

Its function is as follows. The keratin products of mammalian epidermal derivatives such as wool and hair consist of microfibrils embedded in a rigid matrix of other proteins. The matrix proteins include the high-sulfur and high-tyrosine keratins, having molecular weights of 6-20 kDa, whereas the microfibrils contain the larger, low-sulfur keratins (40-56 kDa). The polypeptide is Keratin, high-sulfur matrix protein, IIIA3 (Ovis aries (Sheep)).